Reading from the N-terminus, the 127-residue chain is Holo-[acyl-carrier-protein] synthase (127 aa).

Positions 9 and 58 each coordinate Mg(2+).

It belongs to the P-Pant transferase superfamily. AcpS family. The cofactor is Mg(2+).

The protein resides in the cytoplasm. It carries out the reaction apo-[ACP] + CoA = holo-[ACP] + adenosine 3',5'-bisphosphate + H(+). Functionally, transfers the 4'-phosphopantetheine moiety from coenzyme A to a Ser of acyl-carrier-protein. The protein is Holo-[acyl-carrier-protein] synthase of Shewanella oneidensis (strain ATCC 700550 / JCM 31522 / CIP 106686 / LMG 19005 / NCIMB 14063 / MR-1).